The sequence spans 117 residues: Large ribosomal subunit protein uL24 (117 aa).

It belongs to the universal ribosomal protein uL24 family. In terms of assembly, part of the 50S ribosomal subunit.

Its function is as follows. One of two assembly initiator proteins, it binds directly to the 5'-end of the 23S rRNA, where it nucleates assembly of the 50S subunit. Functionally, one of the proteins that surrounds the polypeptide exit tunnel on the outside of the subunit. This chain is Large ribosomal subunit protein uL24, found in Trichormus variabilis (strain ATCC 29413 / PCC 7937) (Anabaena variabilis).